A 270-amino-acid polypeptide reads, in one-letter code: Formamidopyrimidine-DNA glycosylase (270 aa).

Residue proline 2 is the Schiff-base intermediate with DNA of the active site. Residue glutamate 3 is the Proton donor of the active site. Lysine 58 acts as the Proton donor; for beta-elimination activity in catalysis. DNA-binding residues include histidine 92, arginine 111, and arginine 153. An FPG-type zinc finger spans residues 238 to 270 (SVYGASVCPVCGGALRQIRLAQRGTWFCPRCQR). Catalysis depends on arginine 260, which acts as the Proton donor; for delta-elimination activity.

Belongs to the FPG family. In terms of assembly, monomer. Requires Zn(2+) as cofactor.

The enzyme catalyses Hydrolysis of DNA containing ring-opened 7-methylguanine residues, releasing 2,6-diamino-4-hydroxy-5-(N-methyl)formamidopyrimidine.. It catalyses the reaction 2'-deoxyribonucleotide-(2'-deoxyribose 5'-phosphate)-2'-deoxyribonucleotide-DNA = a 3'-end 2'-deoxyribonucleotide-(2,3-dehydro-2,3-deoxyribose 5'-phosphate)-DNA + a 5'-end 5'-phospho-2'-deoxyribonucleoside-DNA + H(+). In terms of biological role, involved in base excision repair of DNA damaged by oxidation or by mutagenic agents. Acts as a DNA glycosylase that recognizes and removes damaged bases. Has a preference for oxidized purines, such as 7,8-dihydro-8-oxoguanine (8-oxoG). Has AP (apurinic/apyrimidinic) lyase activity and introduces nicks in the DNA strand. Cleaves the DNA backbone by beta-delta elimination to generate a single-strand break at the site of the removed base with both 3'- and 5'-phosphates. This Halorhodospira halophila (strain DSM 244 / SL1) (Ectothiorhodospira halophila (strain DSM 244 / SL1)) protein is Formamidopyrimidine-DNA glycosylase.